A 201-amino-acid polypeptide reads, in one-letter code: CASP-like protein 2B2 (201 aa).

Residues 1–28 (MSYLGVGVSPGNVTGSSTKMKLIDRKVR) lie on the Cytoplasmic side of the membrane. The helical transmembrane segment at 29–49 (VTELILRSLVCAFALVAAILV) threads the bilayer. Topologically, residues 50–71 (ATDVQVREIFTIQKKAKFTDMK) are extracellular. The chain crosses the membrane as a helical span at residues 72 to 92 (ALVFLVVINGIAAGYSLVQAV). Topologically, residues 93–108 (CCLVGLMKGSVLLSEP) are cytoplasmic. The chain crosses the membrane as a helical span at residues 109-129 (LAWAIFFGDQAVAYLCVAGVA). The Extracellular segment spans residues 130–166 (AAAQSAAFAKLGQPELQWMKICDMYGKFCNQVGEGIA). The helical transmembrane segment at 167–187 (SALFACIGMVLISCISAFGVF) threads the bilayer. The Cytoplasmic portion of the chain corresponds to 188–201 (RLYGGSKPRQSSRW).

It belongs to the Casparian strip membrane proteins (CASP) family. Homodimer and heterodimers.

The protein localises to the cell membrane. This Arabidopsis lyrata subsp. lyrata (Lyre-leaved rock-cress) protein is CASP-like protein 2B2.